The sequence spans 309 residues: Small ribosomal subunit protein mS23 (309 aa).

The protein belongs to the mitochondrion-specific ribosomal protein mS23 family. Component of the mitochondrial small ribosomal subunit.

The protein localises to the mitochondrion. The sequence is that of Small ribosomal subunit protein mS23 (RSM25) from Lodderomyces elongisporus (strain ATCC 11503 / CBS 2605 / JCM 1781 / NBRC 1676 / NRRL YB-4239) (Yeast).